We begin with the raw amino-acid sequence, 741 residues long: NAD(P)H-quinone oxidoreductase subunit 5, chloroplastic (741 aa).

The next 15 membrane-spanning stretches (helical) occupy residues 9–29, 40–60, 89–109, 125–145, 147–167, 185–205, 219–239, 258–278, 280–300, 327–347, 396–416, 425–445, 547–567, 606–626, and 721–741; these read WIIPLLPLTVTMLIGLGLLLF, WAVPSVLFLSIGMLLSVELAI, IDPLTSIMSILITTVGILVLI, FSYLSFFNASMLGLVTSSNLI, IYIFWELVGMCSYLLIGFWFA, GDFGLLLGILGLYWITGSFEF, NGVNSLFATLCAFLLFLGAVA, TPISALIHAATMVAAGIFLVA, LLPLFIVIPYIMNLISLIGVI, LGYIMLAPGIGSYRTALFHLI, TTFFWGTLSLCGIPPLACFWS, WLYSPIFAIIAYATAGLTAFY, LLPLLLLGLFTWFVGLIGIPF, ILSVSISVFGIFTASLLYGSV, and SYIFYYSSYVLIFVLIFYFFI.

It belongs to the complex I subunit 5 family. As to quaternary structure, NDH is composed of at least 16 different subunits, 5 of which are encoded in the nucleus.

The protein resides in the plastid. Its subcellular location is the chloroplast thylakoid membrane. It catalyses the reaction a plastoquinone + NADH + (n+1) H(+)(in) = a plastoquinol + NAD(+) + n H(+)(out). The catalysed reaction is a plastoquinone + NADPH + (n+1) H(+)(in) = a plastoquinol + NADP(+) + n H(+)(out). In terms of biological role, NDH shuttles electrons from NAD(P)H:plastoquinone, via FMN and iron-sulfur (Fe-S) centers, to quinones in the photosynthetic chain and possibly in a chloroplast respiratory chain. The immediate electron acceptor for the enzyme in this species is believed to be plastoquinone. Couples the redox reaction to proton translocation, and thus conserves the redox energy in a proton gradient. The chain is NAD(P)H-quinone oxidoreductase subunit 5, chloroplastic (ndhF) from Ceratophyllum demersum (Rigid hornwort).